A 673-amino-acid polypeptide reads, in one-letter code: MGYQHNRSFNKATGAGFIIAMGIVYGDIGTSPLYTMESIVQGQGGLERISETSIIGALSLIIWTLTLITTVKYVWIALKADNNHEGGIFSLFTLVRKYAKWLIIPAMIGGAALLSDGALTPAVTVTSAIEGLRSIPAFHEAFGQQQLPIVIITLAILAILFLIQRFGTSIVGKVFGPVMFIWFSFFGITGLINLFGDFSVLQAINPYWAIHLLLSPENKAGIFVLGSVFLATTGAEALYSDLGHVGRGNIHVSWPFVKVCIILSYCGQAAWLLQNRGKSLGDINPFFAVLPQSLIIFSVILATLAAIIASQALISGSFTLVSEAIRLKLLPRLRINYPGESFGQLYIPAVNLGLWLAASFIVVYFQSSAHMEAAYGLAITVTMLMTTILLTVYLAQHQKVKKVFVVLFFGAFIFIEGLFFAASAVKFLHGGYVVVILAALILFVMAIWHKSDQLFYKYLKSSNLNDYKEQMNKLRKDESYDLYHTNVVYLTAKMDKEWIDRSILYSILDKRPKKAEVYWFVKVNVTDEPYTSEYEVDMLGTDFIVCVNLYLGFHMRQEIPRYLRTIVTNLMESGRLPQQHQPYSIIPGRKVGDFRFILLEEKLINARQMPAFERFVLQTKEQIKKITASPARWFGLHFSEVTVETVPLVLSDVRNLEIHERISKENEVENLSK.

A run of 13 helical transmembrane segments spans residues 14-34 (GAGFIIAMGIVYGDIGTSPLY), 58-78 (LSLIIWTLTLITTVKYVWIAL), 101-121 (WLIIPAMIGGAALLSDGALTP), 147-167 (LPIVIITLAILAILFLIQRFG), 175-195 (FGPVMFIWFSFFGITGLINLF), 196-216 (GDFSVLQAINPYWAIHLLLSP), 220-240 (AGIFVLGSVFLATTGAEALYS), 252-272 (VSWPFVKVCIILSYCGQAAWL), 294-314 (LIIFSVILATLAAIIASQALI), 345-365 (LYIPAVNLGLWLAASFIVVYF), 374-394 (AYGLAITVTMLMTTILLTVYL), 403-423 (VFVVLFFGAFIFIEGLFFAAS), and 427-447 (FLHGGYVVVILAALILFVMAI).

It belongs to the HAK/KUP transporter (TC 2.A.72) family.

Its subcellular location is the cell membrane. The enzyme catalyses K(+)(in) + H(+)(in) = K(+)(out) + H(+)(out). Functionally, transport of potassium into the cell. Likely operates as a K(+):H(+) symporter. This chain is Probable potassium transport system protein Kup 1, found in Lactococcus lactis subsp. cremoris (strain SK11).